The following is a 520-amino-acid chain: Nonsense-mediated mRNA decay factor SMG9 (520 aa).

Positions 1 to 143 are disordered; that stretch reads MSESGHSQPG…KGEKEGQRPT (143 aa). An N-acetylserine modification is found at serine 2. 5 positions are modified to phosphoserine: serine 2, serine 4, serine 7, serine 32, and serine 53. Residues 36 to 53 are compositionally biased toward basic and acidic residues; the sequence is GRERDYIAPWERERRDGS. Pro residues predominate over residues 78 to 94; the sequence is QPPPPAAPAAPPAPAPL. Residues 109-121 show a composition bias toward low complexity; that stretch reads GPAATTSTSTPEG. Positions 122–133 are enriched in pro residues; it reads TAPPPPAAPVPP. At serine 451 the chain carries Phosphoserine.

Belongs to the SMG9 family. In terms of assembly, self-associates to form homodimers and forms heterodimers with SMG8; these assembly forms may represent SMG1C intermediate forms. Component of the SMG1C complex composed of SMG1, SMG8 and SMG9. Self-associates to form homodimers and forms heterodimers with SMG8; these assembly forms may represent SMG1C intermediate forms. Interacts with DHX34; the interaction is RNA-independent. Phosphorylated by SMG1.

In terms of biological role, involved in nonsense-mediated decay (NMD) of mRNAs containing premature stop codons. Is recruited by release factors to stalled ribosomes together with SMG1 and SMG8 (forming the SMG1C protein kinase complex) and, in the SMG1C complex, is required for the efficient association between SMG1 and SMG8. Plays a role in brain, heart, and eye development. The sequence is that of Nonsense-mediated mRNA decay factor SMG9 from Bos taurus (Bovine).